We begin with the raw amino-acid sequence, 39 residues long: Omega-theraphotoxin-Ba1b (39 aa).

Cystine bridges form between C4–C17, C8–C31, and C25–C36.

It belongs to the neurotoxin 12 (Hwtx-2) family. 06 (TXP1) subfamily. As to expression, expressed by the venom gland.

The protein localises to the secreted. Inhibits voltage-gated calcium channels (Cav) in rat cerebellar granule cells. Has insecticidal activity to crickets (Acheta domesticus). Is not toxic to mice. The polypeptide is Omega-theraphotoxin-Ba1b (Brachypelma albiceps (Mexican golden redrump tarantula)).